The chain runs to 97 residues: uncharacterized protein (97 aa).

May have a regulatory function. This is an uncharacterized protein from Synechocystis sp. (strain ATCC 27184 / PCC 6803 / Kazusa).